The chain runs to 962 residues: Glutamate receptor 1 (962 aa).

Residues 1–25 (MFSSFSFLNMFGVLFTVFNLTVVQP) form the signal peptide. Topologically, residues 26-591 (YPSHIIIKSF…SVFSFMQPLS (566 aa)) are extracellular. N-linked (GlcNAc...) asparagine glycosylation is found at Asn-190, Asn-220, Asn-275, Asn-333, Asn-441, and Asn-482. A helical membrane pass occupies residues 592–612 (TEIWMYIIFAYIGVSVVIFLV). Residues 613–668 (SRFSPYEWRVEETSRGGFTISNDFSVYNCLWFTLAAFMQQGTDILPRSISGRIASS) lie on the Cytoplasmic side of the membrane. The helical transmembrane segment at 669 to 689 (AWWFFTMIIVSSYTANLAAFL) threads the bilayer. Residues 690–855 (TLEKMQAPIE…GSSASLNLSK (166 aa)) are Extracellular-facing. The N-linked (GlcNAc...) asparagine glycan is linked to Asn-852. Residues 856–876 (VAGIFYILMGGMVISMLAALG) form a helical membrane-spanning segment. Over 877-962 (EFLYRSRIEA…PANTLYNTAV (86 aa)) the chain is Cytoplasmic.

Belongs to the glutamate-gated ion channel (TC 1.A.10.1) family. Interacts with sol-1. Interacts with cni-1; the interaction negatively regulates export of glr-1 from the endoplasmic reticulum to synapses. Interacts with usp-46; the interaction results in deubiquitination of glr-1. In terms of processing, ubiquitinated. Deubiquitinated by usp-46 which prevents its degradation. Glycosylated. As to expression, command interneurons of the locomotory control circuit (AIB, AVA, AVB, AVD, AVE and PVC) and motor neurons (RMD, RIM, SMD, AVG, PVQ and URY).

It is found in the postsynaptic cell membrane. Its subcellular location is the endoplasmic reticulum. The protein localises to the synapse. The protein resides in the cell membrane. It localises to the recycling endosome. It is found in the cell projection. Its subcellular location is the dendrite. The protein localises to the perikaryon. In terms of biological role, non-NMDA (N-methyl-D-aspartate) ionotropic glutamate receptor. L-glutamate acts as an excitatory neurotransmitter at many synapses in the central nervous system. The postsynaptic actions of glutamate are mediated by a variety of receptors that are named according to their selective agonists. May contribute to a sensory discrimination between mechanical and chemical stimuli. Plays a role in controlling movement in response to environmental cues such as food availability and mechanosensory stimulation such as the nose touch response. In AIB interneurons, promotes omega turns, a movement that frequently follows backwards locomotion or 'reversals' in response to environmental cues while possibly playing an inhibitory role in alternative neurons to inhibit omega turns. This chain is Glutamate receptor 1, found in Caenorhabditis elegans.